The chain runs to 908 residues: Glutamate receptor ionotropic, kainate 2 (908 aa).

The first 31 residues, 1–31 (MKIISPVLSNLVFSRSIKVLLCLLWIGYSQG), serve as a signal peptide directing secretion. Residues 32 to 561 (TTHVLRFGGI…VFSFLNPLSP (530 aa)) are Extracellular-facing. 7 N-linked (GlcNAc...) asparagine glycosylation sites follow: asparagine 67, asparagine 73, asparagine 275, asparagine 378, asparagine 412, asparagine 423, and asparagine 430. A disulfide bridge links cysteine 96 with cysteine 347. Positions 516, 518, and 523 each coordinate L-glutamate. The N-linked (GlcNAc...) asparagine glycan is linked to asparagine 546. A helical membrane pass occupies residues 562 to 582 (DIWMYILLAYLGVSCVLFVIA). Residues 583–638 (RFSPYEWYNPHPCNPDSDVVENNFTLLNSFWFGVGALMQQGSELMPKALSTRIVGG) are Cytoplasmic-facing. Residues 639–659 (IWWFFTLIIISSYTANLAAFL) form a helical membrane-spanning segment. The Extracellular segment spans residues 660–819 (TVERMESPID…KEASALGVQN (160 aa)). L-glutamate is bound by residues alanine 689, threonine 690, and glutamate 738. A disulfide bridge connects residues cysteine 750 and cysteine 804. The N-linked (GlcNAc...) asparagine glycan is linked to asparagine 751. The chain crosses the membrane as a helical span at residues 820–840 (IGGIFIVLAAGLVLSVFVAVG). The Cytoplasmic segment spans residues 841 to 908 (EFLYKSKKNA…RRLPGKETMA (68 aa)). 2 positions are modified to phosphoserine; by PKC: serine 846 and serine 868. Lysine 886 participates in a covalent cross-link: Glycyl lysine isopeptide (Lys-Gly) (interchain with G-Cter in SUMO1).

The protein belongs to the glutamate-gated ion channel (TC 1.A.10.1) family. GRIK2 subfamily. In terms of assembly, homotetramer and heterotetramer with GRIK5. Tetramers may be formed by the dimerization of dimers. Assembles into a kainate-gated homomeric channel that does not bind AMPA. Can form functional heteromeric receptors with GRIK3. Forms a heteromeric complex with GRIK4 and GRIK5. Interacts with DLG4. Interacts (via C-terminus) with KLHL17 (via kelch repeats); the interaction targets GRIK2 for degradation via ubiquitin-proteasome pathway. Interacts with NETO2. Sumoylation mediates kainate receptor-mediated endocytosis and regulates synaptic transmission. Sumoylation is enhanced by PIAS3 and desumoylated by SENP1. Post-translationally, ubiquitinated. Ubiquitination regulates the GRIK2 levels at the synapse by leading kainate receptor degradation through proteasome. In terms of processing, phosphorylated by PKC at Ser-868 upon agonist activation, this directly enhance sumoylation. In terms of tissue distribution, expressed in the hippocampal mossy fiber synapses (at protein level). Most abundant in the cerebellum and the hypothalamus. Expressed in a proportion of dorsal root ganglion (DRG) neurons (13.6%); predominantly small diameter DRG neurons (75%) with the remainder expressed in medium diameter DRG neurons.

The protein resides in the cell membrane. The protein localises to the postsynaptic cell membrane. It carries out the reaction Ca(2+)(in) = Ca(2+)(out). The enzyme catalyses Na(+)(in) = Na(+)(out). Cold receptor activity activated by temperatures between 10-19 degrees Celsius. Functionally, ionotropic glutamate receptor that functions as a cation-permeable ligand-gated ion channel, gated by L-glutamate and the glutamatergic agonist kainic acid. L-glutamate acts as an excitatory neurotransmitter at many synapses in the central nervous system. Binding of the excitatory neurotransmitter L-glutamate induces a conformation change, leading to the opening of the cation channel, and thereby converts the chemical signal to an electrical impulse. The receptor then desensitizes rapidly and enters a transient inactive state, characterized by the presence of bound agonist. Modulates cell surface expression of NETO2. In association with GRIK3, involved in presynaptic facilitation of glutamate release at hippocampal mossy fiber synapses. Its function is as follows. Independent of its ionotropic glutamate receptor activity, acts as a thermoreceptor conferring sensitivity to cold temperatures. Functions in dorsal root ganglion neurons. In terms of biological role, ionotropic glutamate receptor that functions as a cation-permeable ligand-gated ion channel, gated by L-glutamate and the glutamatergic agonist kainic acid. In Mus musculus (Mouse), this protein is Glutamate receptor ionotropic, kainate 2 (Grik2).